Here is a 255-residue protein sequence, read N- to C-terminus: 28.1 kDa virulence protein (255 aa).

Belongs to the SpvA family.

Functionally, not known. This protein is involved in the virulence of salmonellas. This is 28.1 kDa virulence protein (mkaB) from Salmonella typhimurium.